Reading from the N-terminus, the 326-residue chain is uncharacterized protein (326 aa).

Belongs to the ParB family.

This is an uncharacterized protein from Acidianus two-tailed virus (ATV).